We begin with the raw amino-acid sequence, 261 residues long: Type III pantothenate kinase (261 aa).

Residue 7–14 (EQGNTNTM) coordinates ATP. Position 108 to 111 (108 to 111 (GADR)) interacts with substrate. Catalysis depends on D110, which acts as the Proton acceptor. K(+) is bound at residue D130. T133 contributes to the ATP binding site. T187 contributes to the substrate binding site.

It belongs to the type III pantothenate kinase family. Homodimer. NH4(+) serves as cofactor. K(+) is required as a cofactor.

It is found in the cytoplasm. The catalysed reaction is (R)-pantothenate + ATP = (R)-4'-phosphopantothenate + ADP + H(+). It functions in the pathway cofactor biosynthesis; coenzyme A biosynthesis; CoA from (R)-pantothenate: step 1/5. In terms of biological role, catalyzes the phosphorylation of pantothenate (Pan), the first step in CoA biosynthesis. This chain is Type III pantothenate kinase, found in Caulobacter vibrioides (strain ATCC 19089 / CIP 103742 / CB 15) (Caulobacter crescentus).